A 255-amino-acid polypeptide reads, in one-letter code: Bouquet formation protein 3 (255 aa).

The next 8 helical transmembrane spans lie at 13 to 33 (IKVS…NYHL), 48 to 68 (IPYW…LLLQ), 72 to 94 (LGYG…YYLT), 99 to 116 (IAWA…ARCF), 132 to 152 (YSVS…LNYI), 172 to 192 (SLVA…GYVI), 205 to 225 (SLFL…SILF), and 235 to 255 (VVGA…ALSL).

It is found in the endoplasmic reticulum membrane. It localises to the nucleus inner membrane. Connects telomeres to the nuclear envelop (NE) during both vegetative growth and meiosis. This connection ensures clustering of telomeres to the spindle pole body (SPB) when cells enter meiotic prophase. The protein is Bouquet formation protein 3 (bqt3) of Schizosaccharomyces pombe (strain 972 / ATCC 24843) (Fission yeast).